A 707-amino-acid polypeptide reads, in one-letter code: Ribosomal RNA large subunit methyltransferase K/L (707 aa).

Residues 43–154 form the THUMP domain; sequence QIYRCCLWSR…KDKAILGVDM (112 aa).

It belongs to the methyltransferase superfamily. RlmKL family.

The protein localises to the cytoplasm. The catalysed reaction is guanosine(2445) in 23S rRNA + S-adenosyl-L-methionine = N(2)-methylguanosine(2445) in 23S rRNA + S-adenosyl-L-homocysteine + H(+). It carries out the reaction guanosine(2069) in 23S rRNA + S-adenosyl-L-methionine = N(2)-methylguanosine(2069) in 23S rRNA + S-adenosyl-L-homocysteine + H(+). Specifically methylates the guanine in position 2445 (m2G2445) and the guanine in position 2069 (m7G2069) of 23S rRNA. This is Ribosomal RNA large subunit methyltransferase K/L from Vibrio parahaemolyticus serotype O3:K6 (strain RIMD 2210633).